A 381-amino-acid polypeptide reads, in one-letter code: MYG1 exonuclease (381 aa).

The transit peptide at 1-47 (MGRGFLRGVLTLLPLRSVLQVQHCMLVSEPDLPPKRPRNNLMAPPRI) directs the protein to the mitochondrion. An N6-acetyllysine mark is found at lysine 267 and lysine 273.

It belongs to the MYG1 family.

The protein localises to the nucleus. Its subcellular location is the nucleoplasm. It localises to the mitochondrion matrix. The protein resides in the nucleolus. In terms of biological role, 3'-5' RNA exonuclease which cleaves in situ on specific transcripts in both nucleus and mitochondrion. Involved in regulating spatially segregated organellar RNA processing, acts as a coordinator of nucleo-mitochondrial crosstalk. In nucleolus, processes pre-ribosomal RNA involved in ribosome assembly and alters cytoplasmic translation. In mitochondrial matrix, processes 3'-termini of the mito-ribosomal and messenger RNAs and controls translation of mitochondrial proteins. The polypeptide is MYG1 exonuclease (Rattus norvegicus (Rat)).